Here is a 200-residue protein sequence, read N- to C-terminus: Large ribosomal subunit protein uL4 (200 aa).

A disordered region spans residues 43-71; that stretch reads RAQKTRAEVSGSGKKPWRQKGTGRARSGD.

Belongs to the universal ribosomal protein uL4 family. Part of the 50S ribosomal subunit.

Functionally, one of the primary rRNA binding proteins, this protein initially binds near the 5'-end of the 23S rRNA. It is important during the early stages of 50S assembly. It makes multiple contacts with different domains of the 23S rRNA in the assembled 50S subunit and ribosome. Its function is as follows. Forms part of the polypeptide exit tunnel. In Mannheimia succiniciproducens (strain KCTC 0769BP / MBEL55E), this protein is Large ribosomal subunit protein uL4.